Reading from the N-terminus, the 1090-residue chain is Protein CHROMATIN REMODELING 24 (1090 aa).

Disordered regions lie at residues 1-51 (MAEN…MIKL) and 247-273 (VGKQ…NLDR). The Nuclear localization signal signature appears at 44–51 (TKKSMIKL). Basic and acidic residues predominate over residues 256–273 (RHFDDNSEDNRQGYNLDR). Residues 389–564 (WSLHTQGKGG…WALFNFSCPG (176 aa)) enclose the Helicase ATP-binding domain. 402 to 409 (DDMGLGKT) provides a ligand contact to ATP. Residues 515 to 518 (DEGH) carry the DEAH box motif. One can recognise a Helicase C-terminal domain in the interval 736-895 (FIMSLLENLI…IRYFSQQDLR (160 aa)). Residues 1043–1069 (DGGAKIQKQIAELTRELKDMKAAERIN) adopt a coiled-coil conformation.

The protein belongs to the SNF2/RAD54 helicase family.

It is found in the nucleus. Functionally, DNA helicase that acts as an essential component of the spindle assembly checkpoint. Probable chromatin remodeling factor that regulate homologous recombination (HR) and non-homologous recombination (NHR). This Arabidopsis thaliana (Mouse-ear cress) protein is Protein CHROMATIN REMODELING 24.